Consider the following 116-residue polypeptide: Large ribosomal subunit protein bL20 (116 aa).

Belongs to the bacterial ribosomal protein bL20 family.

Functionally, binds directly to 23S ribosomal RNA and is necessary for the in vitro assembly process of the 50S ribosomal subunit. It is not involved in the protein synthesizing functions of that subunit. The chain is Large ribosomal subunit protein bL20 from Bacteroides fragilis (strain ATCC 25285 / DSM 2151 / CCUG 4856 / JCM 11019 / LMG 10263 / NCTC 9343 / Onslow / VPI 2553 / EN-2).